The chain runs to 429 residues: Adenylosuccinate synthetase (429 aa).

Residues 12 to 18 (GDEGKGK) and 40 to 42 (GHT) contribute to the GTP site. D13 acts as the Proton acceptor in catalysis. Residues D13 and G40 each contribute to the Mg(2+) site. Residues 13 to 16 (DEGK), 38 to 41 (NAGH), T128, R142, Q223, T238, and R302 each bind IMP. Catalysis depends on H41, which acts as the Proton donor. Residue 298 to 304 (VNTGRPR) coordinates substrate. Residues R304, 330 to 332 (KLD), and 412 to 414 (GVG) each bind GTP.

The protein belongs to the adenylosuccinate synthetase family. Homodimer. It depends on Mg(2+) as a cofactor.

The protein resides in the cytoplasm. The enzyme catalyses IMP + L-aspartate + GTP = N(6)-(1,2-dicarboxyethyl)-AMP + GDP + phosphate + 2 H(+). The protein operates within purine metabolism; AMP biosynthesis via de novo pathway; AMP from IMP: step 1/2. Functionally, plays an important role in the de novo pathway of purine nucleotide biosynthesis. Catalyzes the first committed step in the biosynthesis of AMP from IMP. The protein is Adenylosuccinate synthetase of Arthrobacter sp. (strain FB24).